We begin with the raw amino-acid sequence, 353 residues long: Very-long-chain 3-oxoacyl-CoA reductase (353 aa).

Residues 33 to 53 (AAWALIAAGGFFVISRALLFG) traverse the membrane as a helical segment. Residues Val78, Asp133, Asp141, Asn160, Tyr227, Lys231, Ile260, and Ser262 each coordinate NADP(+). Tyr227 functions as the Proton donor in the catalytic mechanism. Residue Lys231 is the Lowers pKa of active site Tyr of the active site.

This sequence belongs to the short-chain dehydrogenases/reductases (SDR) family.

The protein resides in the endoplasmic reticulum membrane. It carries out the reaction a very-long-chain (3R)-3-hydroxyacyl-CoA + NADP(+) = a very-long-chain 3-oxoacyl-CoA + NADPH + H(+). Its pathway is lipid metabolism; fatty acid biosynthesis. In terms of biological role, component of the microsomal membrane bound fatty acid elongation system, which produces the 26-carbon very long-chain fatty acids (VLCFA) from palmitate. Catalyzes the reduction of the 3-ketoacyl-CoA intermediate that is formed in each cycle of fatty acid elongation. VLCFAs serve as precursors for ceramide and sphingolipids. The polypeptide is Very-long-chain 3-oxoacyl-CoA reductase (Aspergillus terreus (strain NIH 2624 / FGSC A1156)).